A 398-amino-acid polypeptide reads, in one-letter code: Alpha-2,8-sialyltransferase 8F (398 aa).

Topologically, residues 1–3 (MRP) are cytoplasmic. The chain crosses the membrane as a helical; Signal-anchor for type II membrane protein span at residues 4 to 24 (GGALLALLASLLLLLLLRLLW). The Lumenal portion of the chain corresponds to 25–398 (CPADAPGRAR…KLQFSKCEVA (374 aa)). 4 N-linked (GlcNAc...) asparagine glycosylation sites follow: N66, N93, N151, and N196. 2 disulfide bridges follow: C186–C335 and C200–C395. Residues N214, 236 to 238 (NPS), and 322 to 324 (STG) contribute to the substrate site. H370 functions as the Proton donor/acceptor in the catalytic mechanism.

This sequence belongs to the glycosyltransferase 29 family.

The protein localises to the golgi apparatus membrane. It catalyses the reaction a ganglioside GM3 + CMP-N-acetyl-beta-neuraminate = a ganglioside GD3 + CMP + H(+). The enzyme catalyses a ganglioside GM3 (d18:1(4E)) + CMP-N-acetyl-beta-neuraminate = a ganglioside GD3 (d18:1(4E)) + CMP + H(+). The catalysed reaction is a ganglioside GD1a (d18:1(4E)) + CMP-N-acetyl-beta-neuraminate = a ganglioside GT1a (d18:1(4E)) + CMP + H(+). It carries out the reaction a ganglioside GD1a + CMP-N-acetyl-beta-neuraminate = a ganglioside GT1a + CMP + H(+). It catalyses the reaction a ganglioside GM1b (d18:1(4E)) + CMP-N-acetyl-beta-neuraminate = a ganglioside GD1c (d18:1(4E)) + CMP + H(+). The enzyme catalyses a ganglioside GM1b + CMP-N-acetyl-beta-neuraminate = a ganglioside GD1c + CMP + H(+). The catalysed reaction is a ganglioside GM4 (d18:1(4E)) + CMP-N-acetyl-beta-neuraminate = an N-acetyl-alpha-neuraminosyl-(2-&gt;8)-N-acetyl-alpha-neuraminosyl-(2-&gt;3)-beta-D-galactosyl-(1&lt;-&gt;1')-N-acylsphing-4-enine + CMP + H(+). It carries out the reaction N-acetyl-alpha-neuraminosyl-(2-&gt;3)-beta-D-galactosyl-(1&lt;-&gt;1')-ceramide + CMP-N-acetyl-beta-neuraminate = N-acetyl-alpha-neuraminosyl-(2-&gt;8)-N-acetyl-alpha-neuraminosyl-(2-&gt;3)-beta-D-galactosyl-(1&lt;-&gt;1')-ceramide + CMP + H(+). It catalyses the reaction a ganglioside GT1b (d18:1(4E)) + CMP-N-acetyl-beta-neuraminate = a ganglioside GQ1b (d18:1(4E)) + CMP + H(+). The enzyme catalyses a ganglioside GT1b + CMP-N-acetyl-beta-neuraminate = a ganglioside GQ1b + CMP + H(+). The protein operates within protein modification; protein glycosylation. In terms of biological role, alpha-2,8-sialyltransferase that prefers O-glycans to N-glycans or glycolipids as acceptor substrates. The minimal acceptor substrate is the NeuAc-alpha-2,3(6)-Gal sequence at the non-reducing end of their carbohydrate groups. This Homo sapiens (Human) protein is Alpha-2,8-sialyltransferase 8F.